Here is a 139-residue protein sequence, read N- to C-terminus: Actin-depolymerizing factor 2 (139 aa).

An ADF-H domain is found at 7 to 139; the sequence is GLAVSDECKV…SLDIVKSRTN (133 aa).

This sequence belongs to the actin-binding proteins ADF family. As to expression, expressed in pollen.

Its function is as follows. Actin-depolymerizing protein. Severs actin filaments (F-actin) and binds to actin monomers. This chain is Actin-depolymerizing factor 2 (ADF2), found in Zea mays (Maize).